A 66-amino-acid chain; its full sequence is Antitoxin RelB2 (66 aa).

Its function is as follows. Antitoxin component of a type II toxin-antitoxin (TA) system. Neutralizes the effect of cognate toxin RelE2, but no other RelE or ParE toxin. The protein is Antitoxin RelB2 (relB2) of Caulobacter vibrioides (strain ATCC 19089 / CIP 103742 / CB 15) (Caulobacter crescentus).